The sequence spans 130 residues: Small ribosomal subunit protein uS11 (130 aa).

Belongs to the universal ribosomal protein uS11 family. As to quaternary structure, part of the 30S ribosomal subunit. Interacts with proteins S7 and S18. Binds to IF-3.

Located on the platform of the 30S subunit, it bridges several disparate RNA helices of the 16S rRNA. Forms part of the Shine-Dalgarno cleft in the 70S ribosome. The sequence is that of Small ribosomal subunit protein uS11 from Synechococcus sp. (strain WH7803).